A 206-amino-acid chain; its full sequence is Thiamine-phosphate synthase (206 aa).

4-amino-2-methyl-5-(diphosphooxymethyl)pyrimidine contacts are provided by residues 36-40 and asparagine 68; that span reads QLRAK. Residues aspartate 69 and aspartate 88 each coordinate Mg(2+). Residue serine 105 coordinates 4-amino-2-methyl-5-(diphosphooxymethyl)pyrimidine. Residue 131–133 coordinates 2-[(2R,5Z)-2-carboxy-4-methylthiazol-5(2H)-ylidene]ethyl phosphate; the sequence is TPT. Lysine 134 lines the 4-amino-2-methyl-5-(diphosphooxymethyl)pyrimidine pocket. Glycine 162 is a 2-[(2R,5Z)-2-carboxy-4-methylthiazol-5(2H)-ylidene]ethyl phosphate binding site.

It belongs to the thiamine-phosphate synthase family. Requires Mg(2+) as cofactor.

The enzyme catalyses 2-[(2R,5Z)-2-carboxy-4-methylthiazol-5(2H)-ylidene]ethyl phosphate + 4-amino-2-methyl-5-(diphosphooxymethyl)pyrimidine + 2 H(+) = thiamine phosphate + CO2 + diphosphate. It catalyses the reaction 2-(2-carboxy-4-methylthiazol-5-yl)ethyl phosphate + 4-amino-2-methyl-5-(diphosphooxymethyl)pyrimidine + 2 H(+) = thiamine phosphate + CO2 + diphosphate. It carries out the reaction 4-methyl-5-(2-phosphooxyethyl)-thiazole + 4-amino-2-methyl-5-(diphosphooxymethyl)pyrimidine + H(+) = thiamine phosphate + diphosphate. It functions in the pathway cofactor biosynthesis; thiamine diphosphate biosynthesis; thiamine phosphate from 4-amino-2-methyl-5-diphosphomethylpyrimidine and 4-methyl-5-(2-phosphoethyl)-thiazole: step 1/1. Condenses 4-methyl-5-(beta-hydroxyethyl)thiazole monophosphate (THZ-P) and 2-methyl-4-amino-5-hydroxymethyl pyrimidine pyrophosphate (HMP-PP) to form thiamine monophosphate (TMP). In Thermus thermophilus (strain ATCC BAA-163 / DSM 7039 / HB27), this protein is Thiamine-phosphate synthase.